The primary structure comprises 683 residues: DNA ligase (683 aa).

NAD(+)-binding positions include 29–33 (DAEFD), 79–80 (SL), and glutamate 109. Residue lysine 111 is the N6-AMP-lysine intermediate of the active site. The NAD(+) site is built by arginine 132, glutamate 172, lysine 288, and lysine 312. Zn(2+) contacts are provided by cysteine 406, cysteine 409, cysteine 425, and cysteine 431. The 89-residue stretch at 595-683 (SVPRTLAGVT…GPPAEAGEPT (89 aa)) folds into the BRCT domain.

Belongs to the NAD-dependent DNA ligase family. LigA subfamily. It depends on Mg(2+) as a cofactor. Mn(2+) serves as cofactor.

The enzyme catalyses NAD(+) + (deoxyribonucleotide)n-3'-hydroxyl + 5'-phospho-(deoxyribonucleotide)m = (deoxyribonucleotide)n+m + AMP + beta-nicotinamide D-nucleotide.. Its function is as follows. DNA ligase that catalyzes the formation of phosphodiester linkages between 5'-phosphoryl and 3'-hydroxyl groups in double-stranded DNA using NAD as a coenzyme and as the energy source for the reaction. It is essential for DNA replication and repair of damaged DNA. The chain is DNA ligase from Mycobacterium ulcerans (strain Agy99).